Here is a 101-residue protein sequence, read N- to C-terminus: Small ribosomal subunit protein uS14 (101 aa).

This sequence belongs to the universal ribosomal protein uS14 family. As to quaternary structure, part of the 30S ribosomal subunit. Contacts proteins S3 and S10.

Functionally, binds 16S rRNA, required for the assembly of 30S particles and may also be responsible for determining the conformation of the 16S rRNA at the A site. In Ehrlichia ruminantium (strain Welgevonden), this protein is Small ribosomal subunit protein uS14.